The sequence spans 89 residues: Small ribosomal subunit protein uS15 (89 aa).

The interval 1 to 24 (MSLNAEQKSEIVEQFRRSPSDTGS) is disordered. Residues 7 to 19 (QKSEIVEQFRRSP) show a composition bias toward basic and acidic residues.

Belongs to the universal ribosomal protein uS15 family. In terms of assembly, part of the 30S ribosomal subunit. Forms a bridge to the 50S subunit in the 70S ribosome, contacting the 23S rRNA.

One of the primary rRNA binding proteins, it binds directly to 16S rRNA where it helps nucleate assembly of the platform of the 30S subunit by binding and bridging several RNA helices of the 16S rRNA. Its function is as follows. Forms an intersubunit bridge (bridge B4) with the 23S rRNA of the 50S subunit in the ribosome. The chain is Small ribosomal subunit protein uS15 from Halorhodospira halophila (strain DSM 244 / SL1) (Ectothiorhodospira halophila (strain DSM 244 / SL1)).